Reading from the N-terminus, the 2463-residue chain is Protein TIC 214 (2463 aa).

The next 6 membrane-spanning stretches (helical) occupy residues 18 to 38 (VGLY…LFLL), 60 to 80 (FFTG…HLAL), 86 to 106 (ILLL…SGQW), 127 to 147 (LVFL…GRPM), 170 to 190 (FVGW…VFVW), and 297 to 317 (LFSI…PLLY). Positions 326-441 (QLQRKLSNET…AARAMQEAYK (116 aa)) form a coiled coil. Disordered regions lie at residues 792-841 (AVPK…RKVN), 1230-1249 (SIQK…GPKK), 1393-1417 (SGGR…EQDF), 2116-2136 (EEEK…KLKK), and 2162-2187 (KQRA…RKVQ). Positions 794-830 (PKKKKKISKSKQKNVKSKQKNVKSKQKNVKSKQKNVK) are enriched in basic residues. 3 stretches are compositionally biased toward basic and acidic residues: residues 832-841 (KQNEIKRKVN), 1231-1249 (IQKD…GPKK), and 1397-1417 (ETPE…EQDF). The stretch at 2049–2192 (WDALVASLKQ…KRKVQVQENK (144 aa)) forms a coiled coil. Residues 2124–2136 (KRKKERKKEKLKK) show a composition bias toward basic residues.

This sequence belongs to the TIC214 family. In terms of assembly, part of the Tic complex.

The protein localises to the plastid. The protein resides in the chloroplast inner membrane. Involved in protein precursor import into chloroplasts. May be part of an intermediate translocation complex acting as a protein-conducting channel at the inner envelope. The chain is Protein TIC 214 from Oenothera elata subsp. hookeri (Hooker's evening primrose).